We begin with the raw amino-acid sequence, 613 residues long: RUN domain-containing protein 1 (613 aa).

The segment at 15–36 (AAVGPKAKDEEEEEEEPLPPCE) is disordered. Position 54 is a phosphothreonine (Thr-54). Residues 57–69 (LEEATAEEPGAAP) show a composition bias toward low complexity. Disordered stretches follow at residues 57–79 (LEEA…PGRT), 140–177 (YEGP…RLET), and 305–330 (GKTG…KAED). 2 positions are modified to phosphoserine: Ser-71 and Ser-75. Positions 159–177 (PWLRGEDQSEQEKQERLET) are enriched in basic and acidic residues. A coiled-coil region spans residues 160-235 (WLRGEDQSEQ…IKKLDMNLNE (76 aa)). Residues 309–325 (NGCSRTGSSRTPPGNSK) show a composition bias toward polar residues. An RUN domain is found at 421–602 (ELTMAVRKEL…LKFSLPVDLA (182 aa)). Ser-497 carries the post-translational modification Phosphoserine.

May play a role as p53/TP53 inhibitor and thus may have oncogenic activity. This is RUN domain-containing protein 1 (RUNDC1) from Homo sapiens (Human).